The following is a 360-amino-acid chain: Phospho-N-acetylmuramoyl-pentapeptide-transferase (360 aa).

The next 10 membrane-spanning stretches (helical) occupy residues 27 to 47 (GAIA…IKSL), 72 to 92 (TPTM…LLWA), 94 to 114 (LSNH…AIGF), 135 to 155 (LACE…LGTP), 167 to 187 (GYVV…IVAS), 199 to 219 (GLAI…AYLV), 236 to 256 (AGEL…FLWF), 263 to 283 (IFMG…IAVA), 289 to 309 (VLAI…VQVV), and 337 to 357 (QVVV…LSTL).

The protein belongs to the glycosyltransferase 4 family. MraY subfamily. The cofactor is Mg(2+).

It localises to the cell inner membrane. The enzyme catalyses UDP-N-acetyl-alpha-D-muramoyl-L-alanyl-gamma-D-glutamyl-meso-2,6-diaminopimeloyl-D-alanyl-D-alanine + di-trans,octa-cis-undecaprenyl phosphate = di-trans,octa-cis-undecaprenyl diphospho-N-acetyl-alpha-D-muramoyl-L-alanyl-D-glutamyl-meso-2,6-diaminopimeloyl-D-alanyl-D-alanine + UMP. It functions in the pathway cell wall biogenesis; peptidoglycan biosynthesis. In terms of biological role, catalyzes the initial step of the lipid cycle reactions in the biosynthesis of the cell wall peptidoglycan: transfers peptidoglycan precursor phospho-MurNAc-pentapeptide from UDP-MurNAc-pentapeptide onto the lipid carrier undecaprenyl phosphate, yielding undecaprenyl-pyrophosphoryl-MurNAc-pentapeptide, known as lipid I. This is Phospho-N-acetylmuramoyl-pentapeptide-transferase from Beijerinckia indica subsp. indica (strain ATCC 9039 / DSM 1715 / NCIMB 8712).